The primary structure comprises 231 residues: Large ribosomal subunit protein uL1 (231 aa).

This sequence belongs to the universal ribosomal protein uL1 family. Part of the 50S ribosomal subunit.

In terms of biological role, binds directly to 23S rRNA. The L1 stalk is quite mobile in the ribosome, and is involved in E site tRNA release. Functionally, protein L1 is also a translational repressor protein, it controls the translation of the L11 operon by binding to its mRNA. The sequence is that of Large ribosomal subunit protein uL1 from Francisella tularensis subsp. tularensis (strain FSC 198).